We begin with the raw amino-acid sequence, 314 residues long: Dihydroorotate dehydrogenase (fumarate) (314 aa).

Substrate-binding positions include K46, 70–74 (NSMGL), and N130. K46 participates in a covalent cross-link: Glycyl lysine isopeptide (Lys-Gly) (interchain with G-Cter in ubiquitin). 46-47 (KS) provides a ligand contact to FMN. An FMN-binding site is contributed by N130. C133 (nucleophile) is an active-site residue. Residues K167 and I195 each contribute to the FMN site. 196 to 197 (NS) contributes to the substrate binding site. FMN is bound by residues G224, 252-253 (GG), and 274-275 (GT).

This sequence belongs to the dihydroorotate dehydrogenase family. Type 1 subfamily. In terms of assembly, homodimer. FMN serves as cofactor.

It localises to the cytoplasm. The enzyme catalyses (S)-dihydroorotate + fumarate = orotate + succinate. The protein operates within pyrimidine metabolism; UMP biosynthesis via de novo pathway. The activity is independent of the presence of oxygen. In terms of biological role, catalyzes the conversion of dihydroorotate to orotate with fumarate as the electron acceptor. Molecular oxygen can replace fumarate in vitro. Does not use oxaloacetate or NAD or NADP as electron acceptors. The polypeptide is Dihydroorotate dehydrogenase (fumarate) (URA1) (Saccharomyces cerevisiae (strain ATCC 204508 / S288c) (Baker's yeast)).